We begin with the raw amino-acid sequence, 361 residues long: Plasmid recombination enzyme (361 aa).

Residues Tyr-44 and Tyr-114 each contribute to the DNA site. Positions Arg-331–Leu-361 are disordered.

It belongs to the plasmid mobilization pre family.

In terms of biological role, the interaction of the RSA site and the pre protein may not only serve a function in plasmid maintenance, but also contribute to the distribution of small antibiotic resistance plasmids among Gram-positive bacteria. The polypeptide is Plasmid recombination enzyme (preA) (Lactiplantibacillus plantarum (Lactobacillus plantarum)).